Here is a 466-residue protein sequence, read N- to C-terminus: Prophage integrase IntF (466 aa).

The 106-residue stretch at 134–239 (KTKVTFSVAW…LLRAFIKWSN (106 aa)) folds into the Core-binding (CB) domain. One can recognise a Tyr recombinase domain in the interval 268 to 445 (KADDCLQKEQ…PLDLLRKWHE (178 aa)). Residues Arg-306, Lys-328, His-396, Arg-399, and His-422 contribute to the active site. Catalysis depends on Tyr-432, which acts as the O-(3'-phospho-DNA)-tyrosine intermediate.

Belongs to the 'phage' integrase family.

Its function is as follows. Integrase is necessary for integration of the phage into the host genome by site-specific recombination. In conjunction with excisionase, integrase is also necessary for excision of the prophage from the host genome. In Escherichia coli (strain K12), this protein is Prophage integrase IntF (intF).